Consider the following 193-residue polypeptide: Large ribosomal subunit protein uL5 (193 aa).

The protein belongs to the universal ribosomal protein uL5 family. Part of the 50S ribosomal subunit; part of the 5S rRNA/L5/L18/L25 subcomplex. Contacts the 5S rRNA and the P site tRNA. Forms a bridge to the 30S subunit in the 70S ribosome.

In terms of biological role, this is one of the proteins that bind and probably mediate the attachment of the 5S RNA into the large ribosomal subunit, where it forms part of the central protuberance. In the 70S ribosome it contacts protein S13 of the 30S subunit (bridge B1b), connecting the 2 subunits; this bridge is implicated in subunit movement. Contacts the P site tRNA; the 5S rRNA and some of its associated proteins might help stabilize positioning of ribosome-bound tRNAs. The polypeptide is Large ribosomal subunit protein uL5 (Rhizorhabdus wittichii (strain DSM 6014 / CCUG 31198 / JCM 15750 / NBRC 105917 / EY 4224 / RW1) (Sphingomonas wittichii)).